Here is a 368-residue protein sequence, read N- to C-terminus: UDP-N-acetylglucosamine--N-acetylmuramyl-(pentapeptide) pyrophosphoryl-undecaprenol N-acetylglucosamine transferase (368 aa).

Residues 14-16, asparagine 125, arginine 168, serine 196, and glutamine 297 contribute to the UDP-N-acetyl-alpha-D-glucosamine site; that span reads TGG.

It belongs to the glycosyltransferase 28 family. MurG subfamily.

It is found in the cell inner membrane. The catalysed reaction is di-trans,octa-cis-undecaprenyl diphospho-N-acetyl-alpha-D-muramoyl-L-alanyl-D-glutamyl-meso-2,6-diaminopimeloyl-D-alanyl-D-alanine + UDP-N-acetyl-alpha-D-glucosamine = di-trans,octa-cis-undecaprenyl diphospho-[N-acetyl-alpha-D-glucosaminyl-(1-&gt;4)]-N-acetyl-alpha-D-muramoyl-L-alanyl-D-glutamyl-meso-2,6-diaminopimeloyl-D-alanyl-D-alanine + UDP + H(+). Its pathway is cell wall biogenesis; peptidoglycan biosynthesis. Its function is as follows. Cell wall formation. Catalyzes the transfer of a GlcNAc subunit on undecaprenyl-pyrophosphoryl-MurNAc-pentapeptide (lipid intermediate I) to form undecaprenyl-pyrophosphoryl-MurNAc-(pentapeptide)GlcNAc (lipid intermediate II). The chain is UDP-N-acetylglucosamine--N-acetylmuramyl-(pentapeptide) pyrophosphoryl-undecaprenol N-acetylglucosamine transferase from Nitrobacter winogradskyi (strain ATCC 25391 / DSM 10237 / CIP 104748 / NCIMB 11846 / Nb-255).